Consider the following 113-residue polypeptide: UPF0482 protein CKO_01577 (113 aa).

The signal sequence occupies residues 1–28 (MNNTLSKRLCLTAMLALGAVVYTTSAFA). The interval 44–67 (RQHAAMEKEQWNDTRSLRQKVNTR) is disordered. Over residues 47 to 59 (AAMEKEQWNDTRS) the composition is skewed to basic and acidic residues.

Belongs to the UPF0482 family.

In Citrobacter koseri (strain ATCC BAA-895 / CDC 4225-83 / SGSC4696), this protein is UPF0482 protein CKO_01577.